A 339-amino-acid chain; its full sequence is Proto-oncogene serine/threonine-protein kinase mos (339 aa).

The region spanning 61–335 is the Protein kinase domain; it reads VCLLHRLGSG…LLQKDLKAFR (275 aa). ATP is bound by residues 67–75 and lysine 88; that span reads LGSGGFGSV. Aspartate 196 acts as the Proton acceptor in catalysis.

It belongs to the protein kinase superfamily. Ser/Thr protein kinase family. As to quaternary structure, interacts with MAP2K1/MEK1. As to expression, expressed mainly in gonadal tissues, and cardiac and skeletal muscles.

The protein localises to the cytoplasm. It carries out the reaction L-seryl-[protein] + ATP = O-phospho-L-seryl-[protein] + ADP + H(+). The enzyme catalyses L-threonyl-[protein] + ATP = O-phospho-L-threonyl-[protein] + ADP + H(+). Functionally, serine/threonine kinase involved in the regulation of MAPK signaling. Is an activator of the ERK1/2 signaling cascade playing an essential role in the stimulation of oocyte maturation. In Rattus norvegicus (Rat), this protein is Proto-oncogene serine/threonine-protein kinase mos.